A 799-amino-acid polypeptide reads, in one-letter code: Protein translocase subunit SecA 1 (799 aa).

ATP contacts are provided by residues Q85, 103–107, and D504; that span reads GEGKT.

This sequence belongs to the SecA family. Monomer and homodimer. Part of the essential Sec protein translocation apparatus which comprises SecA, SecYEG and auxiliary proteins SecDF. Other proteins may also be involved.

The protein resides in the cell membrane. The protein localises to the cytoplasm. The catalysed reaction is ATP + H2O + cellular proteinSide 1 = ADP + phosphate + cellular proteinSide 2.. Its function is as follows. Part of the Sec protein translocase complex. Interacts with the SecYEG preprotein conducting channel. Has a central role in coupling the hydrolysis of ATP to the transfer of proteins into and across the cell membrane, serving as an ATP-driven molecular motor driving the stepwise translocation of polypeptide chains across the membrane. This is Protein translocase subunit SecA 1 from Lactobacillus johnsonii (strain CNCM I-12250 / La1 / NCC 533).